We begin with the raw amino-acid sequence, 299 residues long: uncharacterized protein (299 aa).

6 helical membrane passes run 32 to 52 (FILL…YLHL), 56 to 76 (SMII…SILY), 199 to 219 (LAIG…LLGA), 220 to 240 (YLIA…VKPE), 246 to 266 (FEIV…PIFG), and 273 to 293 (FLIS…ILKF).

The protein localises to the cell membrane. This is an uncharacterized protein from Methanocaldococcus jannaschii (strain ATCC 43067 / DSM 2661 / JAL-1 / JCM 10045 / NBRC 100440) (Methanococcus jannaschii).